A 477-amino-acid chain; its full sequence is Glycogen synthase (477 aa).

Position 15 (K15) interacts with ADP-alpha-D-glucose.

It belongs to the glycosyltransferase 1 family. Bacterial/plant glycogen synthase subfamily.

The enzyme catalyses [(1-&gt;4)-alpha-D-glucosyl](n) + ADP-alpha-D-glucose = [(1-&gt;4)-alpha-D-glucosyl](n+1) + ADP + H(+). It functions in the pathway glycan biosynthesis; glycogen biosynthesis. Its function is as follows. Synthesizes alpha-1,4-glucan chains using ADP-glucose. This chain is Glycogen synthase, found in Streptococcus pneumoniae (strain ATCC 700669 / Spain 23F-1).